Consider the following 154-residue polypeptide: AP-1 complex subunit sigma-3 (154 aa).

This sequence belongs to the adaptor complexes small subunit family. In terms of assembly, adaptor protein complex 1 (AP-1) is a heterotetramer composed of two large adaptins (gamma-type subunit AP1G1 and beta-type subunit AP1B1), a medium adaptin (mu-type subunit AP1M1 or AP1M2) and a small adaptin (sigma-type subunit AP1S1 or AP1S2 or AP1S3).

The protein resides in the golgi apparatus. It is found in the cytoplasmic vesicle membrane. Its subcellular location is the membrane. The protein localises to the clathrin-coated pit. Subunit of clathrin-associated adaptor protein complex 1 that plays a role in protein sorting in the late-Golgi/trans-Golgi network (TGN) and/or endosomes. The AP complexes mediate both the recruitment of clathrin to membranes and the recognition of sorting signals within the cytosolic tails of transmembrane cargo molecules. Involved in TLR3 trafficking. The sequence is that of AP-1 complex subunit sigma-3 (Ap1s3) from Mus musculus (Mouse).